An 82-amino-acid chain; its full sequence is Small ribosomal subunit protein uS17 (82 aa).

Belongs to the universal ribosomal protein uS17 family. In terms of assembly, part of the 30S ribosomal subunit.

One of the primary rRNA binding proteins, it binds specifically to the 5'-end of 16S ribosomal RNA. This chain is Small ribosomal subunit protein uS17, found in Rickettsia rickettsii (strain Iowa).